Consider the following 1411-residue polypeptide: MSAPVGPRGRLAPIPAASQPPLQPEMPDLSHLTEEERKIILAVMDRQKKKVKEEHKPQLTQWFPFSGITELVNNVLQPQQKQQNEKEPQTKLHQQFEMYKEQVKKMGEESQQQQEQKGDAPTCGICHKTKFADGCGHNCSYCQTKFCARCGGRVSLRSNKVMWVCNLCRKQQEILTKSGAWFYNSGSNTPQQPDQKVLRGLRNEEAPQEKKPKLHEQTQFQGPSGDLSVPAVEKSRSHGLTRQHSIKNGSGVKHHIASDIASDRKRSPSVSRDQNRRYDQREEREEYSQYATSDTAMPRSPSDYADRRSQHEPQFYEDSDHLSYRDSNRRSHRHSKEYIVDDEDVESRDEYERQRREEEYQSRYRSDPNLARYPVKPQPYEEQMRIHAEVSRARHERRHSDVSLANADLEDSRISMLRMDRPSRQRSISERRAAMENQRSYSMERTREAQGPSSYAQRTTNHSPPTPRRSPLPIDRPDLRRTDSLRKQHHLDPSSAVRKTKREKMETMLRNDSLSSDQSESVRPPPPKPHKSKKGGKMRQISLSSSEEELASTPEYTSCDDVEIESESVSEKGDSQKGKRKTSEQAVLSDSNTRSERQKEMMYFGGHSLEEDLEWSEPQIKDSGVDTCSSTTLNEEHSHSDKHPVTWQPSKDGDRLIGRILLNKRLKDGSVPRDSGAMLGLKVVGGKMTESGRLCAFITKVKKGSLADTVGHLRPGDEVLEWNGRLLQGATFEEVYNIILESKPEPQVELVVSRPIGDIPRIPDSTHAQLESSSSSFESQKMDRPSISVTSPMSPGMLRDVPQFLSGQLSIKLWFDKVGHQLIVTILGAKDLPSREDGRPRNPYVKIYFLPDRSDKNKRRTKTVKKTLEPKWNQTFIYSPVHRREFRERMLEITLWDQARVREEESEFLGEILIELETALLDDEPHWYKLQTHDVSSLPLPHPSPYMPRRQLHGESPTRRLQRSKRISDSEVSDYDCDDGIGVVSDYRHDGRDLQSSTLSVPEQVMSSNHCSPSGSPHRVDVIGRTRSWSPSVPPPQSRNVEQGLRGTRTMTGHYNTISRMDRHRVMDDHYSPDRDRDCEAADRQPYHRSRSTEQRPLLERTTTRSRSTERPDTNLMRSMPSLMTGRSAPPSPALSRSHPRTGSVQTSPSSTPVAGRRGRQLPQLPPKGTLDRKAGGKKLRSTVQRSTETGLAVEMRNWMTRQASRESTDGSMNSYSSEGNLIFPGVRLASDSQFSDFLDGLGPAQLVGRQTLATPAMGDIQVGMMDKKGQLEVEIIRARGLVVKPGSKTLPAPYVKVYLLDNGVCIAKKKTKVARKTLEPLYQQLLSFEESPQGKVLQIIVWGDYGRMDHKSFMGVAQILLDELELSNMVIGWFKLFPPSSLVDPTLAPLTRRASQSSLESSTGPSYSRS.

The interval 1-33 (MSAPVGPRGRLAPIPAASQPPLQPEMPDLSHLT) is disordered. The RabBD domain occupies 26 to 185 (MPDLSHLTEE…TKSGAWFYNS (160 aa)). The FYVE-type zinc finger occupies 117–173 (KGDAPTCGICHKTKFADGCGHNCSYCQTKFCARCGGRVSLRSNKVMWVCNLCRKQQE). Positions 123, 126, 139, 142, 147, 150, 165, and 168 each coordinate Zn(2+). Basic and acidic residues-rich tracts occupy residues 203-216 (NEEAPQEKKPKLHE), 273-287 (DQNRRYDQREEREEY), 318-329 (DSDHLSYRDSNR), 348-366 (RDEYERQRREEEYQSRYRS), 382-401 (EQMRIHAEVSRARHERRHSD), and 410-434 (EDSRISMLRMDRPSRQRSISERRAA). Disordered stretches follow at residues 203–598 (NEEA…SERQ) and 623–650 (SGVDTCSSTTLNEEHSHSDKHPVTWQPS). At Ser-400 the chain carries Phosphoserine. Positions 451 to 463 (GPSSYAQRTTNHS) are enriched in polar residues. Positions 475–492 (DRPDLRRTDSLRKQHHLD) are enriched in basic and acidic residues. Over residues 510 to 521 (RNDSLSSDQSES) the composition is skewed to polar residues. The segment covering 528 to 537 (KPHKSKKGGK) has biased composition (basic residues). Over residues 558 to 568 (SCDDVEIESES) the composition is skewed to acidic residues. 2 stretches are compositionally biased toward basic and acidic residues: residues 569–583 (VSEKGDSQKGKRKTS) and 634–644 (NEEHSHSDKHP). The 87-residue stretch at 668–754 (DGSVPRDSGA…EPQVELVVSR (87 aa)) folds into the PDZ domain. Thr-689 bears the Phosphothreonine mark. Residues 762–793 (IPDSTHAQLESSSSSFESQKMDRPSISVTSPM) form a disordered region. Phosphoserine occurs at positions 791 and 794. Residues 805–928 (LSGQLSIKLW…ALLDDEPHWY (124 aa)) enclose the C2 1 domain. Disordered stretches follow at residues 939 to 973 (PLPHPSPYMPRRQLHGESPTRRLQRSKRISDSEVS) and 993 to 1190 (DLQS…STET). Composition is skewed to polar residues over residues 994 to 1015 (LQSSTLSVPEQVMSSNHCSPSG) and 1049 to 1059 (RTMTGHYNTIS). Positions 1060 to 1113 (RMDRHRVMDDHYSPDRDRDCEAADRQPYHRSRSTEQRPLLERTTTRSRSTERPD) are enriched in basic and acidic residues. The segment covering 1143–1153 (GSVQTSPSSTP) has biased composition (polar residues). Ser-1148 is modified (phosphoserine). The region spanning 1257 to 1375 (AMGDIQVGMM…ELSNMVIGWF (119 aa)) is the C2 2 domain. Residues Ser-1396 and Ser-1399 each carry the phosphoserine modification.

Interacts with RAB3A and RAB3B that have been activated by GTP-binding. Interacts with RAB3C, RAB3D and RAB26. Interacts with TSPOAP1 and RIMBP2. Interacts with PPFIA3 and PPFIA4. Interacts via its zinc finger with the first C2 domain of UNC13A. Forms a complex consisting of UNC13A, RIMS2 and RAB3A. Heterodimer with PCLO. Part of a ternary complex involving PCLO and EPAC2. Widely expressed. Expressed in melanocytes. In fetal tissues, predominantly expressed in the brain. In the retina, expressed in the outer plexiform layer (at protein level). In the cerebellum, expressed in Purkinje cells (at protein level). In the pancreas, expressed in Langerhans islets (at protein level).

The protein localises to the cell membrane. The protein resides in the synapse. It localises to the presynaptic cell membrane. Rab effector involved in exocytosis. May act as scaffold protein. Plays a role in dendrite formation by melanocytes. This Homo sapiens (Human) protein is Regulating synaptic membrane exocytosis protein 2 (RIMS2).